Here is a 20-residue protein sequence, read N- to C-terminus: Unknown protein NF015 from 2D-PAGE (20 aa).

The segment at 1 to 20 (TPQIQKPAPQFSKTALLPDE) is disordered.

The polypeptide is Unknown protein NF015 from 2D-PAGE (Naegleria fowleri (Brain eating amoeba)).